The sequence spans 487 residues: Probable nuclear hormone receptor HR3 (487 aa).

Residues 48-123 (IIPCKVCGDK…LGMSRDAVKF (76 aa)) constitute a DNA-binding region (nuclear receptor). NR C4-type zinc fingers lie at residues 51–71 (CKVC…CEGC) and 87–111 (CPRN…LQKC). Residues 145–176 (MRAQSDAAPDSSVYDTQTPSSSDQLHHNNYNS) form a disordered region. Polar residues predominate over residues 157–167 (VYDTQTPSSSD). The region spanning 237–480 (INDVLIKTLA…PALYKELFSI (244 aa)) is the NR LBD domain.

It belongs to the nuclear hormone receptor family. NR1 subfamily.

It localises to the nucleus. In terms of biological role, putative receptor whose ligand is not yet known. The protein is Probable nuclear hormone receptor HR3 of Drosophila melanogaster (Fruit fly).